Here is a 603-residue protein sequence, read N- to C-terminus: NADH-ubiquinone oxidoreductase chain 5 (603 aa).

The next 15 membrane-spanning stretches (helical) occupy residues 38–58 (SIVA…MCLD), 87–107 (MMFI…SLWY), 122–142 (LIFL…QLFI), 144–160 (WEGV…WWYA), 171–191 (AILY…WFIL), 211–233 (TPLL…HPWL), 241–261 (TPVS…FLLI), 272–292 (LIQT…AVCA), 301–320 (IVAF…IGIN), 325–347 (AFLH…GSII), 370–390 (STSL…TGFY), 407–429 (WALS…MILL), 458–478 (AAGS…ASPF), 482–502 (IPLY…LTAL), and 582–602 (GMIK…LLLI).

The protein belongs to the complex I subunit 5 family. In terms of assembly, core subunit of respiratory chain NADH dehydrogenase (Complex I) which is composed of 45 different subunits.

It localises to the mitochondrion inner membrane. The enzyme catalyses a ubiquinone + NADH + 5 H(+)(in) = a ubiquinol + NAD(+) + 4 H(+)(out). Core subunit of the mitochondrial membrane respiratory chain NADH dehydrogenase (Complex I) which catalyzes electron transfer from NADH through the respiratory chain, using ubiquinone as an electron acceptor. Essential for the catalytic activity and assembly of complex I. In Homo sapiens (Human), this protein is NADH-ubiquinone oxidoreductase chain 5 (MT-ND5).